The following is a 1024-amino-acid chain: SAC3 family protein 1 (1024 aa).

Residues 1 to 62 (MEKRNETGNN…QDSRQKRFSS (62 aa)) form a disordered region. The segment covering 11–21 (RLKRSNNRGKS) has biased composition (basic residues). A compositionally biased stretch (basic and acidic residues) spans 22–38 (KKDWKDASVETTPRETS). The span at 39–52 (VDEDNTSVFEDVEA) shows a compositional bias: acidic residues. Positions 243 to 433 (EVEQLRKGIL…NKTAFFNDSK (191 aa)) constitute a PCI domain. Ser841 bears the Phosphoserine mark. Residues 945 to 1022 (AQLEELEVVR…ARDLLKKVET (78 aa)) adopt a coiled-coil conformation.

It belongs to the SAC3 family.

The protein localises to the cytoplasm. It localises to the nucleus envelope. The protein is SAC3 family protein 1 of Schizosaccharomyces pombe (strain 972 / ATCC 24843) (Fission yeast).